The following is a 127-amino-acid chain: Fluoride-specific ion channel FluC (127 aa).

4 consecutive transmembrane segments (helical) span residues 4–24, 38–58, 71–91, and 104–124; these read FSILGFIALGGAIGACSRYLV, YGTLTVNVVGSFIMGLLIAAF, VIGLGFLGALTTFSTFSMDNV, and LNILLNVVLSISAAWIGFQLL. Na(+) contacts are provided by Gly-78 and Thr-81.

The protein belongs to the fluoride channel Fluc/FEX (TC 1.A.43) family.

It is found in the cell inner membrane. The catalysed reaction is fluoride(in) = fluoride(out). Its activity is regulated as follows. Na(+) is not transported, but it plays an essential structural role and its presence is essential for fluoride channel function. Fluoride-specific ion channel. Important for reducing fluoride concentration in the cell, thus reducing its toxicity. This chain is Fluoride-specific ion channel FluC, found in Vibrio parahaemolyticus serotype O3:K6 (strain RIMD 2210633).